Reading from the N-terminus, the 206-residue chain is Large ribosomal subunit protein uL4 (206 aa).

Residues 46 to 77 (GTRAQKDREQVKHSTKKPFKQKGTGNARAGMT) are disordered.

It belongs to the universal ribosomal protein uL4 family. As to quaternary structure, part of the 50S ribosomal subunit.

In terms of biological role, one of the primary rRNA binding proteins, this protein initially binds near the 5'-end of the 23S rRNA. It is important during the early stages of 50S assembly. It makes multiple contacts with different domains of the 23S rRNA in the assembled 50S subunit and ribosome. Its function is as follows. Forms part of the polypeptide exit tunnel. The sequence is that of Large ribosomal subunit protein uL4 from Acidovorax ebreus (strain TPSY) (Diaphorobacter sp. (strain TPSY)).